Reading from the N-terminus, the 96-residue chain is UPF0235 protein VV1_1522 (96 aa).

This sequence belongs to the UPF0235 family.

This is UPF0235 protein VV1_1522 from Vibrio vulnificus (strain CMCP6).